The chain runs to 356 residues: Protein RecA (356 aa).

ATP is bound at residue 71 to 78 (GPESSGKT).

Belongs to the RecA family.

The protein resides in the cytoplasm. Can catalyze the hydrolysis of ATP in the presence of single-stranded DNA, the ATP-dependent uptake of single-stranded DNA by duplex DNA, and the ATP-dependent hybridization of homologous single-stranded DNAs. It interacts with LexA causing its activation and leading to its autocatalytic cleavage. The protein is Protein RecA of Synechococcus elongatus (strain ATCC 33912 / PCC 7942 / FACHB-805) (Anacystis nidulans R2).